A 299-amino-acid chain; its full sequence is MAALLKRILRRRMAEKRSGRGRMAAARTTGAQSRKTAQRSGRSEADRRRRVHGQNFLVDRETVQRFVRFADPDPGEVVLEVGAGNGAITRELARLCRRVVAYEIDRHFADRLREATAEDPRIEVVAGDFLKTSQPKVPFSVVGNIPFGNTADIVDWCLNARRLRTTTLVTQLEYARKRTGGYRRWSRLTVATWPEVEWRMGERISRRWFRPVPAVDSAVLRLERRPVPLIPPGLMHDFRDLVETGFTGKGGSLDASLRRRFPARRVAAGFRRARLEQGVVVAYVTPGQWITLFEELHGR.

A disordered region spans residues 14-53 (AEKRSGRGRMAAARTTGAQSRKTAQRSGRSEADRRRRVHG). Residues 21–31 (GRMAAARTTGA) are compositionally biased toward low complexity. The S-adenosyl-L-methionine site is built by Asn55, Leu57, Gly82, Glu103, Asp128, and Asn144.

Belongs to the class I-like SAM-binding methyltransferase superfamily. rRNA adenine N(6)-methyltransferase family.

Its function is as follows. Probable RNA methylase. Confers resistance to carbomycin and several other macrolides, lincomycin and vernamycin B, but not to all macrolide-lincosamide-streptogramin B antibiotics. The polypeptide is rRNA methyltransferase (carB) (Streptomyces thermotolerans).